Here is a 527-residue protein sequence, read N- to C-terminus: Baeyer-Villiger monooxygenase (527 aa).

FAD contacts are provided by residues S36, E56, 64-67 (TWRV), D76, Y82, and I125. Residue 74 to 76 (ACD) coordinates NADP(+). Residues 199 to 205 (TGASAIQ), 222 to 223 (RT), and 308 to 309 (KR) each bind NADP(+). M415 provides a ligand contact to FAD.

This sequence belongs to the FAD-binding monooxygenase family. Requires FAD as cofactor.

In terms of biological role, catalyzes a Baeyer-Villiger oxidation reaction, i.e. the insertion of an oxygen atom into a carbon-carbon bond adjacent to a carbonyl, which converts ketones to esters or lactones using NADPH and/or NADH as an electron donor. Thus, can convert bicyclo[3.2.0]hept-2-en-6-one into the oxidative lactone products 2-oxabicyclo[3.3.0]oct-6-en-3-one and 3-oxabicyclo[3.3.0]oct-6-en-2-one. Is also able to catalyze the sulfoxidation of methyl phenyl sulfide (thioanisole). The protein is Baeyer-Villiger monooxygenase of Pseudomonas aeruginosa (strain ATCC 15692 / DSM 22644 / CIP 104116 / JCM 14847 / LMG 12228 / 1C / PRS 101 / PAO1).